The primary structure comprises 345 residues: L-threonine 3-dehydrogenase (345 aa).

Zn(2+) is bound at residue Cys42. Catalysis depends on charge relay system residues Thr44 and His47. His67, Glu68, Cys97, Cys100, Cys103, and Cys111 together coordinate Zn(2+). NAD(+) contacts are provided by residues Ile179, Asp199, Arg204, 266–268 (LGI), and 290–291 (IY).

The protein belongs to the zinc-containing alcohol dehydrogenase family. In terms of assembly, homotetramer. Requires Zn(2+) as cofactor.

The protein localises to the cytoplasm. The enzyme catalyses L-threonine + NAD(+) = (2S)-2-amino-3-oxobutanoate + NADH + H(+). It functions in the pathway amino-acid degradation; L-threonine degradation via oxydo-reductase pathway; glycine from L-threonine: step 1/2. Catalyzes the NAD(+)-dependent oxidation of L-threonine to 2-amino-3-ketobutyrate. This Rhizobium etli (strain ATCC 51251 / DSM 11541 / JCM 21823 / NBRC 15573 / CFN 42) protein is L-threonine 3-dehydrogenase.